The primary structure comprises 458 residues: MVIVWYHQLLLVLLIFIGAAKGAQYIGSGASQPNRTDVVWMVPSWTCKNEYSIDVEKYGILQNEDQHFVGGKQFAIFYEHSFGKIPYFKAQNESDPKNGGLPQMGDLEAHLIQAEKDINETIPDENFNGIAVIDIEEFRPMWELSWGPFSVYKTESIRLTRQQHPYWSTKQIEWQAERDYEKACQKFFIETLRLGKRLRPNAKWGYYLFPKCNGDVGQKSDTDCSTLFQKFNDNLHWLWGESTALFPSIYLYPSQKQNPEYNFVNSGALITETKRIKRNYCPSCEIHVFTKIEYNPYYTPDDFYSKQNLASTLDLAIKMNANSVVIWSTSQSIGSRCGSLQTYVDNTLGPYLQLTDRNLDKCRMERCEGRGECYLPRPKTNPAIYNFACRCERPYFGKSCEYRGRRMGVSMPKASQTPQVIPDVTAYFSTSSNGTKKYNAPNQFYSRTGGDIKLARKL.

A signal peptide spans 1–22 (MVIVWYHQLLLVLLIFIGAAKG). Residues 358-401 (NLDKCRMERCEGRGECYLPRPKTNPAIYNFACRCERPYFGKSCE) form the EGF-like domain. Intrachain disulfides connect Cys-362-Cys-373, Cys-367-Cys-389, and Cys-391-Cys-400.

Belongs to the glycosyl hydrolase 56 family.

In terms of biological role, endo-beta-galactosaminidase that specifically hydrolyzes chondroitin, releasing GlcUA-beta-(1-&gt;3)-GalNAc-beta-(1-&gt;4)-GlcUA-beta-(1-&gt;3)-GalNAc as the main product. Also hydrolyzes to a lesser extent chondroitin sulfates (CS-A, CS-C) and hyaluronic acid. May regulate the function of chondroitin in cell division. The sequence is that of Chondroitin hydrolase from Caenorhabditis elegans.